A 259-amino-acid chain; its full sequence is Deoxyribose-phosphate aldolase (259 aa).

Residue Asp-102 is the Proton donor/acceptor of the active site. The Schiff-base intermediate with acetaldehyde role is filled by Lys-167. The active-site Proton donor/acceptor is Lys-201.

Belongs to the DeoC/FbaB aldolase family. DeoC type 2 subfamily.

The protein localises to the cytoplasm. The catalysed reaction is 2-deoxy-D-ribose 5-phosphate = D-glyceraldehyde 3-phosphate + acetaldehyde. Its pathway is carbohydrate degradation; 2-deoxy-D-ribose 1-phosphate degradation; D-glyceraldehyde 3-phosphate and acetaldehyde from 2-deoxy-alpha-D-ribose 1-phosphate: step 2/2. Catalyzes a reversible aldol reaction between acetaldehyde and D-glyceraldehyde 3-phosphate to generate 2-deoxy-D-ribose 5-phosphate. In Photorhabdus laumondii subsp. laumondii (strain DSM 15139 / CIP 105565 / TT01) (Photorhabdus luminescens subsp. laumondii), this protein is Deoxyribose-phosphate aldolase.